The following is a 394-amino-acid chain: Probable purine permease 8 (394 aa).

Transmembrane regions (helical) follow at residues Trp-45 to Leu-65, Thr-77 to Phe-97, Phe-113 to Asn-133, Val-139 to Phe-159, Phe-172 to Val-192, Val-208 to Val-228, Leu-247 to Gly-267, Thr-289 to Phe-309, Phe-315 to Phe-335, and Ile-344 to Asp-364. The segment at Thr-373–Val-394 is disordered. The segment covering Pro-383–Val-394 has biased composition (basic and acidic residues).

This sequence belongs to the purine permeases (TC 2.A.7.14) family.

Its subcellular location is the membrane. The protein is Probable purine permease 8 (PUP8) of Arabidopsis thaliana (Mouse-ear cress).